The sequence spans 111 residues: uncharacterized protein (111 aa).

2 helical membrane passes run 7-29 (LYSS…RALY) and 49-71 (PSLL…SINL).

It localises to the membrane. This is an uncharacterized protein from Saccharomyces cerevisiae (strain ATCC 204508 / S288c) (Baker's yeast).